Here is a 149-residue protein sequence, read N- to C-terminus: MRAVVQRIKEGKVTVEGEITGECNFGLLVYLGVGREDTVEDAKYLAEKIVNLRIFEDQEEKLNLSVKDVGGSLLVISQFTLFGDCRKGRRPSFSEAAKPDEADYLYQEFVRCCNDVGMTVGTGVFQAHMMVHAINDGPVTMLIDSKKTF.

Residues 137 to 138 carry the Gly-cisPro motif, important for rejection of L-amino acids motif; sequence GP.

The protein belongs to the DTD family. As to quaternary structure, homodimer.

The protein resides in the cytoplasm. It carries out the reaction glycyl-tRNA(Ala) + H2O = tRNA(Ala) + glycine + H(+). The catalysed reaction is a D-aminoacyl-tRNA + H2O = a tRNA + a D-alpha-amino acid + H(+). Its function is as follows. An aminoacyl-tRNA editing enzyme that deacylates mischarged D-aminoacyl-tRNAs. Also deacylates mischarged glycyl-tRNA(Ala), protecting cells against glycine mischarging by AlaRS. Acts via tRNA-based rather than protein-based catalysis; rejects L-amino acids rather than detecting D-amino acids in the active site. By recycling D-aminoacyl-tRNA to D-amino acids and free tRNA molecules, this enzyme counteracts the toxicity associated with the formation of D-aminoacyl-tRNA entities in vivo and helps enforce protein L-homochirality. The sequence is that of D-aminoacyl-tRNA deacylase from Alkaliphilus metalliredigens (strain QYMF).